The chain runs to 154 residues: Transcriptional repressor NrdR (154 aa).

The segment at 3–34 is a zinc-finger region; it reads CPFCNAPDTKVIDSRLATEGAQVRRRRECMSC. In terms of domain architecture, ATP-cone spans 49–139; it reads PRVIKSDGNR…VYRSFQDVNA (91 aa).

The protein belongs to the NrdR family. Zn(2+) is required as a cofactor.

Its function is as follows. Negatively regulates transcription of bacterial ribonucleotide reductase nrd genes and operons by binding to NrdR-boxes. The polypeptide is Transcriptional repressor NrdR (Hydrogenovibrio crunogenus (strain DSM 25203 / XCL-2) (Thiomicrospira crunogena)).